The sequence spans 227 residues: Cytochrome c oxidase subunit 2 (227 aa).

Topologically, residues 1–14 are mitochondrial intermembrane; that stretch reads MAHPLQLGLQDASS. A helical membrane pass occupies residues 15-45; the sequence is PIMEELLYFHDHALMIVFLISSLVLYTISLM. Topologically, residues 46–59 are mitochondrial matrix; it reads LTTKLMHTSTMNAQ. Residues 60 to 87 traverse the membrane as a helical segment; it reads MVETMWTILPAVILTSIALPSLRILYMT. The Mitochondrial intermembrane portion of the chain corresponds to 88–227; it reads DEINNPLLTI…HFETWSTLTS (140 aa). Cu cation-binding residues include His161, Cys196, Glu198, Cys200, His204, and Met207. Residue Glu198 participates in Mg(2+) binding.

Belongs to the cytochrome c oxidase subunit 2 family. In terms of assembly, component of the cytochrome c oxidase (complex IV, CIV), a multisubunit enzyme composed of 14 subunits. The complex is composed of a catalytic core of 3 subunits MT-CO1, MT-CO2 and MT-CO3, encoded in the mitochondrial DNA, and 11 supernumerary subunits COX4I, COX5A, COX5B, COX6A, COX6B, COX6C, COX7A, COX7B, COX7C, COX8 and NDUFA4, which are encoded in the nuclear genome. The complex exists as a monomer or a dimer and forms supercomplexes (SCs) in the inner mitochondrial membrane with NADH-ubiquinone oxidoreductase (complex I, CI) and ubiquinol-cytochrome c oxidoreductase (cytochrome b-c1 complex, complex III, CIII), resulting in different assemblies (supercomplex SCI(1)III(2)IV(1) and megacomplex MCI(2)III(2)IV(2)). Found in a complex with TMEM177, COA6, COX18, COX20, SCO1 and SCO2. Interacts with TMEM177 in a COX20-dependent manner. Interacts with COX20. Interacts with COX16. Requires Cu cation as cofactor.

Its subcellular location is the mitochondrion inner membrane. It carries out the reaction 4 Fe(II)-[cytochrome c] + O2 + 8 H(+)(in) = 4 Fe(III)-[cytochrome c] + 2 H2O + 4 H(+)(out). Its function is as follows. Component of the cytochrome c oxidase, the last enzyme in the mitochondrial electron transport chain which drives oxidative phosphorylation. The respiratory chain contains 3 multisubunit complexes succinate dehydrogenase (complex II, CII), ubiquinol-cytochrome c oxidoreductase (cytochrome b-c1 complex, complex III, CIII) and cytochrome c oxidase (complex IV, CIV), that cooperate to transfer electrons derived from NADH and succinate to molecular oxygen, creating an electrochemical gradient over the inner membrane that drives transmembrane transport and the ATP synthase. Cytochrome c oxidase is the component of the respiratory chain that catalyzes the reduction of oxygen to water. Electrons originating from reduced cytochrome c in the intermembrane space (IMS) are transferred via the dinuclear copper A center (CU(A)) of subunit 2 and heme A of subunit 1 to the active site in subunit 1, a binuclear center (BNC) formed by heme A3 and copper B (CU(B)). The BNC reduces molecular oxygen to 2 water molecules using 4 electrons from cytochrome c in the IMS and 4 protons from the mitochondrial matrix. In Galeopterus variegatus (Malayan flying lemur), this protein is Cytochrome c oxidase subunit 2 (MT-CO2).